Reading from the N-terminus, the 387-residue chain is 1-deoxy-D-xylulose 5-phosphate reductoisomerase (387 aa).

The NADPH site is built by T11, G12, S13, I14, G37, R38, N39, and N125. K126 lines the 1-deoxy-D-xylulose 5-phosphate pocket. E127 lines the NADPH pocket. Residue D151 coordinates Mn(2+). The 1-deoxy-D-xylulose 5-phosphate site is built by S152, E153, S177, and H200. Residue E153 participates in Mn(2+) binding. G206 serves as a coordination point for NADPH. 1-deoxy-D-xylulose 5-phosphate contacts are provided by S213, N218, K219, and E222. E222 is a Mn(2+) binding site.

Belongs to the DXR family. Mg(2+) is required as a cofactor. Mn(2+) serves as cofactor.

It carries out the reaction 2-C-methyl-D-erythritol 4-phosphate + NADP(+) = 1-deoxy-D-xylulose 5-phosphate + NADPH + H(+). It functions in the pathway isoprenoid biosynthesis; isopentenyl diphosphate biosynthesis via DXP pathway; isopentenyl diphosphate from 1-deoxy-D-xylulose 5-phosphate: step 1/6. Functionally, catalyzes the NADPH-dependent rearrangement and reduction of 1-deoxy-D-xylulose-5-phosphate (DXP) to 2-C-methyl-D-erythritol 4-phosphate (MEP). This Desulforamulus reducens (strain ATCC BAA-1160 / DSM 100696 / MI-1) (Desulfotomaculum reducens) protein is 1-deoxy-D-xylulose 5-phosphate reductoisomerase.